Consider the following 117-residue polypeptide: Large ribosomal subunit protein uL23 (117 aa).

Belongs to the universal ribosomal protein uL23 family. In terms of assembly, part of the 50S ribosomal subunit. Contacts protein L29, and trigger factor when it is bound to the ribosome.

One of the early assembly proteins it binds 23S rRNA. One of the proteins that surrounds the polypeptide exit tunnel on the outside of the ribosome. Forms the main docking site for trigger factor binding to the ribosome. The protein is Large ribosomal subunit protein uL23 of Acetivibrio thermocellus (strain ATCC 27405 / DSM 1237 / JCM 9322 / NBRC 103400 / NCIMB 10682 / NRRL B-4536 / VPI 7372) (Clostridium thermocellum).